Here is an 864-residue protein sequence, read N- to C-terminus: Leucine--tRNA ligase (864 aa).

A 'HIGH' region motif is present at residues 42–52 (PYPSGKLHMGH). The 'KMSKS' region signature appears at 624–628 (KMSKS). Lys-627 is an ATP binding site.

The protein belongs to the class-I aminoacyl-tRNA synthetase family.

It is found in the cytoplasm. The catalysed reaction is tRNA(Leu) + L-leucine + ATP = L-leucyl-tRNA(Leu) + AMP + diphosphate. This Burkholderia ambifaria (strain MC40-6) protein is Leucine--tRNA ligase.